We begin with the raw amino-acid sequence, 266 residues long: Protein SCO2 homolog, mitochondrial (266 aa).

Residues 1–41 (MLLLARPPKAWHRLFQLQPLALLGTPGGKTQHVRYQLFSTP) constitute a mitochondrion transit peptide. Topologically, residues 42 to 60 (GPADTGRQGQPQGPGLRTR) are mitochondrial matrix. The helical transmembrane segment at 61 to 78 (LLVTALVGAGLGGAWLAL) threads the bilayer. The Mitochondrial intermembrane segment spans residues 79-266 (RAEKERGRQQ…HMAAFRSVLR (188 aa)). Residues 85–259 (GRQQQRTEAL…ITDSVRRHMA (175 aa)) enclose the Thioredoxin domain. Cu cation is bound by residues Cys133, Cys137, and His224. A disulfide bridge links Cys133 with Cys137.

Belongs to the SCO1/2 family. Homodimer. Interacts with COA6. Found in a complex with TMEM177, COX20, COA6, MT-CO2/COX2, COX18 and SCO1. Interacts with TMEM177 in a COX20-dependent manner. Interacts with COX20 in a MT-CO2/COX2- and COX18-dependent manner. Interacts with COX16.

The protein resides in the mitochondrion inner membrane. Copper metallochaperone essential for the synthesis and maturation of cytochrome c oxidase subunit II (MT-CO2/COX2) by facilitating the incorporation of copper into the Cu(A) site of MT-CO2/COX2. Could also act as a thiol-disulfide oxidoreductase to regulate the redox state of the cysteines in SCO1 during maturation of MT-CO2/COX2. The chain is Protein SCO2 homolog, mitochondrial (SCO2) from Bos taurus (Bovine).